Consider the following 495-residue polypeptide: Glutamyl-tRNA(Gln) amidotransferase subunit A (495 aa).

Active-site charge relay system residues include Lys-75 and Ser-150. Ser-174 (acyl-ester intermediate) is an active-site residue.

This sequence belongs to the amidase family. GatA subfamily. As to quaternary structure, heterotrimer of A, B and C subunits.

The catalysed reaction is L-glutamyl-tRNA(Gln) + L-glutamine + ATP + H2O = L-glutaminyl-tRNA(Gln) + L-glutamate + ADP + phosphate + H(+). Its function is as follows. Allows the formation of correctly charged Gln-tRNA(Gln) through the transamidation of misacylated Glu-tRNA(Gln) in organisms which lack glutaminyl-tRNA synthetase. The reaction takes place in the presence of glutamine and ATP through an activated gamma-phospho-Glu-tRNA(Gln). This Ralstonia nicotianae (strain ATCC BAA-1114 / GMI1000) (Ralstonia solanacearum) protein is Glutamyl-tRNA(Gln) amidotransferase subunit A.